The following is a 43-amino-acid chain: Potassium channel toxin gamma-KTx 4.1 (43 aa).

Disulfide bonds link C5/C23, C11/C34, C20/C39, and C24/C41.

Belongs to the ergtoxin family. Gamma-KTx 4 subfamily. In terms of tissue distribution, expressed by the venom gland.

The protein resides in the secreted. Functionally, reversibly blocks Kv11/ERG potassium channels. In Centruroides limpidus (Mexican scorpion), this protein is Potassium channel toxin gamma-KTx 4.1.